Here is a 528-residue protein sequence, read N- to C-terminus: ATP synthase F(1) complex catalytic subunit beta, mitochondrial (528 aa).

The N-terminal 46 residues, M1–Y46, are a transit peptide targeting the mitochondrion. O-linked (GlcNAc) serine glycosylation is present at S106. Residues K124 and K161 each carry the N6-acetyllysine; alternate modification. An N6-succinyllysine; alternate mark is found at K124 and K161. K198 carries the post-translational modification N6-acetyllysine. The ADP site is built by G209, V210, G211, K212, T213, and V214. G209 contacts ATP. Residues G209, V210, G211, K212, and T213 each coordinate phosphate. ATP contacts are provided by G211, K212, T213, and V214. T213 is a binding site for Mg(2+). E238 is a binding site for Mg(2+). ATP is bound at residue R239. An N6-acetyllysine; alternate mark is found at K259 and K264. An N6-succinyllysine; alternate mark is found at K259 and K264. T312 carries the post-translational modification Phosphothreonine. S415 carries the phosphoserine modification. K426 bears the N6-acetyllysine mark. The residue at position 433 (S433) is a Phosphoserine. Residues K480 and K485 each carry the N6-acetyllysine modification. K522 carries the post-translational modification N6-acetyllysine; alternate. K522 carries the N6-succinyllysine; alternate modification.

Belongs to the ATPase alpha/beta chains family. Homotrimer. Component of the ATP synthase complex composed at least of ATP5F1A/subunit alpha, ATP5F1B/subunit beta, ATP5MC1/subunit c (homooctomer), MT-ATP6/subunit a, MT-ATP8/subunit 8, ATP5ME/subunit e, ATP5MF/subunit f, ATP5MG/subunit g, ATP5MK/subunit k, ATP5MJ/subunit j, ATP5F1C/subunit gamma, ATP5F1D/subunit delta, ATP5F1E/subunit epsilon, ATP5PF/subunit F6, ATP5PB/subunit b, ATP5PD/subunit d, ATP5PO/subunit OSCP. ATP synthase complex consists of a soluble F(1) head domain (subunits alpha(3) and beta(3)) - the catalytic core - and a membrane F(0) domain - the membrane proton channel (subunits c, a, 8, e, f, g, k and j). These two domains are linked by a central stalk (subunits gamma, delta, and epsilon) rotating inside the F1 region and a stationary peripheral stalk (subunits F6, b, d, and OSCP). Interacts with PPIF. Interacts with BCL2L1 isoform BCL-X(L); the interaction mediates the association of BCL2L1 isoform BCL-X(L) with the mitochondrial membrane F(1)F(0) ATP synthase and enhances neurons metabolic efficiency. Interacts with CLN5 and PPT1. Interacts with S100A1; this interaction increases F1-ATPase activity. Interacts with MTLN. Interacts with TTC5/STRAP; the interaction results in decreased mitochondrial ATP production.

It localises to the mitochondrion inner membrane. It carries out the reaction ATP + H2O + 4 H(+)(in) = ADP + phosphate + 5 H(+)(out). Its function is as follows. Catalytic subunit beta, of the mitochondrial membrane ATP synthase complex (F(1)F(0) ATP synthase or Complex V) that produces ATP from ADP in the presence of a proton gradient across the membrane which is generated by electron transport complexes of the respiratory chain. ATP synthase complex consist of a soluble F(1) head domain - the catalytic core - and a membrane F(1) domain - the membrane proton channel. These two domains are linked by a central stalk rotating inside the F(1) region and a stationary peripheral stalk. During catalysis, ATP synthesis in the catalytic domain of F(1) is coupled via a rotary mechanism of the central stalk subunits to proton translocation. In vivo, can only synthesize ATP although its ATP hydrolase activity can be activated artificially in vitro. With the subunit alpha (ATP5F1A), forms the catalytic core in the F(1) domain. In Bos taurus (Bovine), this protein is ATP synthase F(1) complex catalytic subunit beta, mitochondrial.